We begin with the raw amino-acid sequence, 718 residues long: DNA ligase (718 aa).

NAD(+) contacts are provided by residues 34-38 (DAEYD), 83-84 (SL), and Glu-115. Lys-117 (N6-AMP-lysine intermediate) is an active-site residue. The NAD(+) site is built by Arg-138, Glu-186, Lys-302, and Lys-326. Cys-420, Cys-423, Cys-438, and Cys-444 together coordinate Zn(2+). A BRCT domain is found at 604 to 694 (PKGDALAGKT…DRSAPAASNN (91 aa)).

The protein belongs to the NAD-dependent DNA ligase family. LigA subfamily. Mg(2+) is required as a cofactor. The cofactor is Mn(2+).

It carries out the reaction NAD(+) + (deoxyribonucleotide)n-3'-hydroxyl + 5'-phospho-(deoxyribonucleotide)m = (deoxyribonucleotide)n+m + AMP + beta-nicotinamide D-nucleotide.. DNA ligase that catalyzes the formation of phosphodiester linkages between 5'-phosphoryl and 3'-hydroxyl groups in double-stranded DNA using NAD as a coenzyme and as the energy source for the reaction. It is essential for DNA replication and repair of damaged DNA. This is DNA ligase from Roseiflexus castenholzii (strain DSM 13941 / HLO8).